Reading from the N-terminus, the 180-residue chain is Translation initiation factor IF-3 (180 aa).

It belongs to the IF-3 family. Monomer.

It is found in the cytoplasm. Functionally, IF-3 binds to the 30S ribosomal subunit and shifts the equilibrium between 70S ribosomes and their 50S and 30S subunits in favor of the free subunits, thus enhancing the availability of 30S subunits on which protein synthesis initiation begins. The protein is Translation initiation factor IF-3 of Hyphomonas neptunium (strain ATCC 15444).